Here is a 426-residue protein sequence, read N- to C-terminus: Probable inactive metalloprotease YmfF (426 aa).

Residues histidine 50 and glutamate 138 each coordinate Zn(2+).

This sequence belongs to the peptidase M16 family.

This Bacillus subtilis (strain 168) protein is Probable inactive metalloprotease YmfF (ymfF).